A 264-amino-acid polypeptide reads, in one-letter code: MINRNHRPLRGVLSDPDEPAAAAALAHRLDLPLLTEPPETPALFLHHSRNGLALRSSGSNAPGPIRVSLDEGRQGQRLRQASLKRETLARACGLRGGRSLRIVDATAGLGRDAMVLAALGARVTLIERHPVIAALLADGLRRARRSHPELAARLHLVEADSLQWLAELTPAERPEVICLDPMYPAGSTRGAVRKDLQALRELPDWPGLAPVDEVALLALARASATARVVVKRPGRAAPLAGKAPDWQLPGRSTRFDVYRGLAGD.

S-adenosyl-L-methionine contacts are provided by residues 111 to 112 (RD), 127 to 128 (ER), and Asp180.

Belongs to the methyltransferase superfamily. RsmJ family.

It is found in the cytoplasm. The catalysed reaction is guanosine(1516) in 16S rRNA + S-adenosyl-L-methionine = N(2)-methylguanosine(1516) in 16S rRNA + S-adenosyl-L-homocysteine + H(+). Functionally, specifically methylates the guanosine in position 1516 of 16S rRNA. The polypeptide is Ribosomal RNA small subunit methyltransferase J (Alkalilimnicola ehrlichii (strain ATCC BAA-1101 / DSM 17681 / MLHE-1)).